The primary structure comprises 90 residues: Antitoxin epsilon (90 aa).

This sequence belongs to the epsilon antitoxin family. In the presence of the zeta toxin, forms an inactive PezA(2)PezT(2) heterotetramer. The heterotetramer is still able to bind the zeta toxin substrate UNAG.

Antitoxin component of a type II toxin-antitoxin (TA) system. Neutralizes the toxic effect of cognate zeta toxin. Part of a postsegregational killing (PSK) system involved in the killing of plasmid-free cells. Continuous synthesis of the epsilon antitoxin is required to counteract the zeta toxin. The polypeptide is Antitoxin epsilon (Streptococcus pyogenes).